The sequence spans 1118 residues: uncharacterized protein (1118 aa).

Disordered regions lie at residues 1-69, 1044-1071, and 1090-1118; these read MESG…NGED, PKSV…EKID, and IRPT…SFEL. Residues 13-34 show a composition bias toward acidic residues; it reads DMVEEDNDEDSFEEPACEDSFD. Polar residues predominate over residues 35 to 60; sequence SQEASSKANEPQNDSFDEPIQSSVSK. Residues 1107–1118 are compositionally biased toward acidic residues; that stretch reads EDSDDLEDSFEL.

This is an uncharacterized protein from Caenorhabditis elegans.